Reading from the N-terminus, the 159-residue chain is Large ribosomal subunit protein uL10 (159 aa).

Belongs to the universal ribosomal protein uL10 family. Part of the ribosomal stalk of the 50S ribosomal subunit. The N-terminus interacts with L11 and the large rRNA to form the base of the stalk. The C-terminus forms an elongated spine to which L12 dimers bind in a sequential fashion forming a multimeric L10(L12)X complex.

In terms of biological role, forms part of the ribosomal stalk, playing a central role in the interaction of the ribosome with GTP-bound translation factors. In Campylobacter jejuni subsp. jejuni serotype O:6 (strain 81116 / NCTC 11828), this protein is Large ribosomal subunit protein uL10.